The following is a 998-amino-acid chain: Beta-galactosidase (998 aa).

Glu-431 functions as the Proton donor in the catalytic mechanism. The active-site Nucleophile is the Glu-508.

Belongs to the glycosyl hydrolase 2 family.

It carries out the reaction Hydrolysis of terminal non-reducing beta-D-galactose residues in beta-D-galactosides.. The chain is Beta-galactosidase (lacZ) from Lactococcus lactis subsp. lactis (strain IL1403) (Streptococcus lactis).